Consider the following 152-residue polypeptide: Small ribosomal subunit protein uS8m (152 aa).

This sequence belongs to the universal ribosomal protein uS8 family.

It localises to the mitochondrion. The chain is Small ribosomal subunit protein uS8m (RPS8) from Marchantia polymorpha (Common liverwort).